The sequence spans 122 residues: Large ribosomal subunit protein uL14 (122 aa).

It belongs to the universal ribosomal protein uL14 family. Part of the 50S ribosomal subunit. Forms a cluster with proteins L3 and L19. In the 70S ribosome, L14 and L19 interact and together make contacts with the 16S rRNA in bridges B5 and B8.

Binds to 23S rRNA. Forms part of two intersubunit bridges in the 70S ribosome. This is Large ribosomal subunit protein uL14 from Dehalococcoides mccartyi (strain ATCC BAA-2100 / JCM 16839 / KCTC 5957 / BAV1).